The chain runs to 437 residues: Amino-acid acetyltransferase (437 aa).

Residues 289 to 429 (ENIRLATSFD…EHYNYQRMSK (141 aa)) enclose the N-acetyltransferase domain.

This sequence belongs to the acetyltransferase family. ArgA subfamily.

It is found in the cytoplasm. The catalysed reaction is L-glutamate + acetyl-CoA = N-acetyl-L-glutamate + CoA + H(+). Its pathway is amino-acid biosynthesis; L-arginine biosynthesis; N(2)-acetyl-L-ornithine from L-glutamate: step 1/4. This chain is Amino-acid acetyltransferase, found in Actinobacillus pleuropneumoniae serotype 7 (strain AP76).